The sequence spans 530 residues: Type 2 DNA topoisomerase 6 subunit B (530 aa).

ATP-binding positions include Asn42, Asp76, 97–98 (SK), 106–113 (GMYGLGVK), and Lys427.

This sequence belongs to the TOP6B family. As to quaternary structure, homodimer. Heterotetramer of two Top6A and two Top6B chains.

It catalyses the reaction ATP-dependent breakage, passage and rejoining of double-stranded DNA.. Its function is as follows. Relaxes both positive and negative superturns and exhibits a strong decatenase activity. The protein is Type 2 DNA topoisomerase 6 subunit B of Saccharolobus islandicus (strain M.16.4 / Kamchatka #3) (Sulfolobus islandicus).